The chain runs to 576 residues: Insulin-like growth factor 2 mRNA-binding protein 1 (576 aa).

RRM domains are found at residues 2–75 and 81–156; these read NKLY…HSVP and RKIQ…YIPD. The interval 158–189 is disordered; that stretch reads QSVQGPENGRRGGFGARGAPRQGSPVTAGAPV. 2 KH domains span residues 195-260 and 276-343; these read DIPL…CKMI and EVPL…EQEI. A Phosphotyrosine; by SRC modification is found at Tyr396. KH domains follow at residues 404–469 and 486–552; these read QETV…QGRI and KLET…QRKI.

This sequence belongs to the RRM IMP/VICKZ family. Can form homooligomers and heterooligomers with IGF2BP1 and IGF2BP3 in an RNA-dependent manner. Associates with the cytoskeleton, predominantly with actin filament bundles and occasionally with microtubules. In a heterologous system, interacts with ELAVL1, DHX9 and HNRNPU. In terms of processing, phosphorylated by SRC at Tyr-396. This residue is involved in ACTB mRNA binding, its phosphorylation impairs association with ACTB mRNA and hence abolishes translational repression. Phosphorylation occurs in close proximity to filopodia and in the growth cones of differentiated neuroglioblastoma cells. In terms of tissue distribution, expressed in neurons and embryonic fibroblasts (at protein level).

The protein resides in the nucleus. The protein localises to the cytoplasm. Its subcellular location is the perinuclear region. It localises to the P-body. It is found in the stress granule. The protein resides in the cell projection. The protein localises to the growth cone. Its subcellular location is the filopodium. It localises to the lamellipodium. Functionally, RNA-binding factor that recruits target transcripts to cytoplasmic protein-RNA complexes (mRNPs). This transcript 'caging' into mRNPs allows mRNA transport and transient storage. It also modulates the rate and location at which target transcripts encounter the translational apparatus and shields them from endonuclease attacks or microRNA-mediated degradation. Preferentially binds to N6-methyladenosine (m6A)-containing mRNAs and increases their stability. Plays a direct role in the transport and translation of transcripts required for axonal regeneration in adult sensory neurons. Regulates localized beta-actin/ACTB mRNA translation in polarized cells, a crucial process for cell migration and neurite outgrowth. Co-transcriptionally associates with the ACTB mRNA in the nucleus. This binding involves by a conserved 54-nucleotide element in the ACTB mRNA 3'-UTR, known as the 'zipcode'. The ribonucleoparticle (RNP) thus formed is exported to the cytoplasm, binds to a motor protein and is transported along the cytoskeleton to the cell periphery. During transport, IGF2BP1 prevents beta-actin mRNA from being translated into protein. When the RNP complex reaches its destination near the plasma membrane, IGF2BP1 is phosphorylated by SRC. This releases the mRNA, allowing ribosomal 40S and 60S subunits to assemble and initiate ACTB protein synthesis. The monomeric ACTB protein then assembles into the subcortical actin cytoskeleton, which pushes the leading edge onwards. Binds MYC mRNA. Binding to MYC mRNA is enhanced by m6A-modification of the CRD. Promotes the directed movement of cells by fine-tuning intracellular signaling networks. Binds to MAPK4 3'-UTR and inhibits its translation. Interacts with PTEN transcript open reading frame (ORF) and prevents mRNA decay. This combined action on MAPK4 (down-regulation) and PTEN (up-regulation) antagonizes HSPB1 phosphorylation, consequently it prevents G-actin sequestration by phosphorylated HSPB1, allowing F-actin polymerization. Hence enhances the velocity of cell migration and stimulates directed cell migration by PTEN-modulated polarization. This is Insulin-like growth factor 2 mRNA-binding protein 1 (IGF2BP1) from Gallus gallus (Chicken).